Reading from the N-terminus, the 443-residue chain is MLRQSDFKIAIVGAGPAGLTLASRLTASSHSFDFTVFERRDKPDPSQVSVPCANLDLHRELGLRAIKGCGLYPQFLEVQSACTEQTRILDITGTVLSDTTGDGERPEISRNALIQLLLESIPEERIRWNTKVLDITPANCSRSKGKECLRFTDTSIATTPISEEIYDLIVGADGAWSRIRAAIPNAPKPIYSGVCYMTMYLRISREQYPDMDNMIGSGTFAVVGDNKLLLAQRAIHGTLRVCLFLHSKCLAAVRKELLASMHNHNTGPCPLLNPDDLINSLPSNPKTLQELLLTHDDFFASWSEDIKRLLRIAFESQVADAEIITRPMYMLPLVPYPYAHQRGIALVGDAASLMTPFAGRGVNVAMADSLDLAEELERLHLVTVSSSASTPAAIFADKLEGALSAYERTAYTRAKDAMELTWRNLCLSFSEKASDLFAAVMAS.

The protein belongs to the aromatic-ring hydroxylase family. FAD serves as cofactor.

It functions in the pathway secondary metabolite biosynthesis. Its pathway is alkaloid biosynthesis. It participates in mycotoxin biosynthesis. In terms of biological role, monooxygenase; part of the gene cluster that mediates the biosynthesis of the aspoquinolone mycotoxins. The role of asqM within the aspoquinolone pathway has still to be determined. The first step of the pathway is catalyzed by the nonribosomal peptide synthetase asqK that condenses anthranilic acid and O-methyl-L-tyrosine to produce 4'-methoxycyclopeptin. 4'-methoxycyclopeptin is then converted to 4'-methoxydehydrocyclopeptin by the ketoglutarate-dependent dioxygenase asqJ. AsqJ also converts its first product 4'-methoxydehydrocyclopeptin to 4'-methoxycyclopenin. The following conversion of 4'-methoxycyclopenin into 4'-methoxyviridicatin is catalyzed by the cyclopenase asqI. 4'-methoxyviridicatin is the precursor of quinolone natural products, and is further converted to quinolinone B. The prenyltransferase asqH1 then catalyzes the canonical Friedel-Crafts alkylation of quinolinone B with dimethylallyl cation to yield dimethylallyl quinolone, which is subjected to FAD-dependent dehydrogenation by the FAD-linked oxidoreductase asqF to yield conjugated aryl diene. The delta(3') double bond then serves as the site of the second alkylation with DMAPP catalyzed by the prenyltransferase asqH2 to yield a carbenium ion intermediate, which can be attacked by H(2)O to yield a styrenyl quinolone containing a C3'-hydroxyprenyl chain. The FAD-dependent monooxygenase asqG performs epoxidation of the terminal C7'-C8' olefin. Finally, after dehydratation of the epoxide at C3 by asqC, the quinolone epoxide rearrangement protein asqO catalyzes an enzymatic 3-exo-tet cyclization to yield the cyclopropyl-THF ring system in aspoquinolone. In Emericella nidulans (strain FGSC A4 / ATCC 38163 / CBS 112.46 / NRRL 194 / M139) (Aspergillus nidulans), this protein is Monooxygenase asqM.